A 283-amino-acid chain; its full sequence is Formamidopyrimidine-DNA glycosylase (283 aa).

The Schiff-base intermediate with DNA role is filled by Pro2. The active-site Proton donor is Glu3. The Proton donor; for beta-elimination activity role is filled by Lys58. Residues His100, Arg119, and Lys162 each contribute to the DNA site. The FPG-type zinc finger occupies 247-283 (RVYGREGQRCQTPDCAEKILRKVQSGRSSFYCPACQR). Arg273 acts as the Proton donor; for delta-elimination activity in catalysis.

It belongs to the FPG family. As to quaternary structure, monomer. Zn(2+) serves as cofactor.

The enzyme catalyses Hydrolysis of DNA containing ring-opened 7-methylguanine residues, releasing 2,6-diamino-4-hydroxy-5-(N-methyl)formamidopyrimidine.. It catalyses the reaction 2'-deoxyribonucleotide-(2'-deoxyribose 5'-phosphate)-2'-deoxyribonucleotide-DNA = a 3'-end 2'-deoxyribonucleotide-(2,3-dehydro-2,3-deoxyribose 5'-phosphate)-DNA + a 5'-end 5'-phospho-2'-deoxyribonucleoside-DNA + H(+). Functionally, involved in base excision repair of DNA damaged by oxidation or by mutagenic agents. Acts as a DNA glycosylase that recognizes and removes damaged bases. Has a preference for oxidized purines, such as 7,8-dihydro-8-oxoguanine (8-oxoG). Has AP (apurinic/apyrimidinic) lyase activity and introduces nicks in the DNA strand. Cleaves the DNA backbone by beta-delta elimination to generate a single-strand break at the site of the removed base with both 3'- and 5'-phosphates. The protein is Formamidopyrimidine-DNA glycosylase of Jannaschia sp. (strain CCS1).